The following is a 260-amino-acid chain: MVTFYGKTFASRLLIGSALYPSPAIMQGAIRAAGSNIVTVSLRRESAGGKTGDAFWNLIRELDVAVLPNTAGCRSVREAVTTAKLARELFGTSWIKLEVIADNDTLQPDVVGLVEAAAILIKDGFEVFPYCTEDLSVASRLVDAGCKVVMPWAAPIGSARGITNRDALKLLRDRLPDITLVVDAGIGAPSHAAQALELGYDAVLLNTAIAKAADPVAMANAFRLGVEAGRTAFEAGLMNARDFASPSTPVVGTPFWHAVS.

Lysine 96 functions as the Schiff-base intermediate with DXP in the catalytic mechanism. 1-deoxy-D-xylulose 5-phosphate contacts are provided by residues glycine 157, 184 to 185, and 206 to 207; these read AG and NT.

Belongs to the ThiG family. In terms of assembly, homotetramer. Forms heterodimers with either ThiH or ThiS.

It localises to the cytoplasm. The catalysed reaction is [ThiS sulfur-carrier protein]-C-terminal-Gly-aminoethanethioate + 2-iminoacetate + 1-deoxy-D-xylulose 5-phosphate = [ThiS sulfur-carrier protein]-C-terminal Gly-Gly + 2-[(2R,5Z)-2-carboxy-4-methylthiazol-5(2H)-ylidene]ethyl phosphate + 2 H2O + H(+). The protein operates within cofactor biosynthesis; thiamine diphosphate biosynthesis. Its function is as follows. Catalyzes the rearrangement of 1-deoxy-D-xylulose 5-phosphate (DXP) to produce the thiazole phosphate moiety of thiamine. Sulfur is provided by the thiocarboxylate moiety of the carrier protein ThiS. In vitro, sulfur can be provided by H(2)S. This chain is Thiazole synthase, found in Bradyrhizobium diazoefficiens (strain JCM 10833 / BCRC 13528 / IAM 13628 / NBRC 14792 / USDA 110).